Consider the following 89-residue polypeptide: Small ribosomal subunit protein uS15 (89 aa).

Belongs to the universal ribosomal protein uS15 family. Part of the 30S ribosomal subunit. Forms a bridge to the 50S subunit in the 70S ribosome, contacting the 23S rRNA.

In terms of biological role, one of the primary rRNA binding proteins, it binds directly to 16S rRNA where it helps nucleate assembly of the platform of the 30S subunit by binding and bridging several RNA helices of the 16S rRNA. Its function is as follows. Forms an intersubunit bridge (bridge B4) with the 23S rRNA of the 50S subunit in the ribosome. In Agrobacterium fabrum (strain C58 / ATCC 33970) (Agrobacterium tumefaciens (strain C58)), this protein is Small ribosomal subunit protein uS15.